Reading from the N-terminus, the 475-residue chain is Glutamate--tRNA ligase 2 (475 aa).

Residues Pro9–Ser19 carry the 'HIGH' region motif. The 'KMSKS' region signature appears at Lys238–Arg242. Lys241 provides a ligand contact to ATP.

It belongs to the class-I aminoacyl-tRNA synthetase family. Glutamate--tRNA ligase type 1 subfamily. As to quaternary structure, monomer.

It is found in the cytoplasm. The enzyme catalyses tRNA(Glu) + L-glutamate + ATP = L-glutamyl-tRNA(Glu) + AMP + diphosphate. In terms of biological role, catalyzes the attachment of glutamate to tRNA(Glu) in a two-step reaction: glutamate is first activated by ATP to form Glu-AMP and then transferred to the acceptor end of tRNA(Glu). The sequence is that of Glutamate--tRNA ligase 2 from Bartonella quintana (strain Toulouse) (Rochalimaea quintana).